We begin with the raw amino-acid sequence, 103 residues long: NADH-quinone oxidoreductase subunit K (103 aa).

3 helical membrane-spanning segments follow: residues 5–25 (VPTS…LIGV), 32–52 (ILIF…LVAF), and 66–86 (FIVM…IVAI).

It belongs to the complex I subunit 4L family. In terms of assembly, NDH-1 is composed of 15 different subunits. Subunits NuoA, H, J, K, L, M, N constitute the membrane sector of the complex.

The protein localises to the cell membrane. The catalysed reaction is a quinone + NADH + 5 H(+)(in) = a quinol + NAD(+) + 4 H(+)(out). NDH-1 shuttles electrons from NADH, via FMN and iron-sulfur (Fe-S) centers, to quinones in the respiratory chain. The immediate electron acceptor for the enzyme in this species is believed to be a menaquinone. Couples the redox reaction to proton translocation (for every two electrons transferred, four hydrogen ions are translocated across the cytoplasmic membrane), and thus conserves the redox energy in a proton gradient. The sequence is that of NADH-quinone oxidoreductase subunit K from Deinococcus radiodurans (strain ATCC 13939 / DSM 20539 / JCM 16871 / CCUG 27074 / LMG 4051 / NBRC 15346 / NCIMB 9279 / VKM B-1422 / R1).